Here is a 297-residue protein sequence, read N- to C-terminus: HTH-type transcriptional regulator ArgP (297 aa).

Positions 4–60 (PDYRTLQALDAVIRERGFERAAQKLCITQSAVSQRIKQLENMFGQPLLVRTVPPRPT) constitute an HTH lysR-type domain. Residues 21-40 (FERAAQKLCITQSAVSQRIK) constitute a DNA-binding region (H-T-H motif).

Belongs to the LysR transcriptional regulatory family. In terms of assembly, homodimer.

Functionally, controls the transcription of genes involved in arginine and lysine metabolism. The protein is HTH-type transcriptional regulator ArgP of Escherichia coli O7:K1 (strain IAI39 / ExPEC).